Here is a 390-residue protein sequence, read N- to C-terminus: Chorismate synthase (390 aa).

NADP(+) contacts are provided by R39 and R45. Residues 132-134 (RSS), 253-254 (NA), G298, 313-317 (KPIPT), and R339 contribute to the FMN site.

The protein belongs to the chorismate synthase family. In terms of assembly, homotetramer. FMNH2 is required as a cofactor.

The enzyme catalyses 5-O-(1-carboxyvinyl)-3-phosphoshikimate = chorismate + phosphate. It participates in metabolic intermediate biosynthesis; chorismate biosynthesis; chorismate from D-erythrose 4-phosphate and phosphoenolpyruvate: step 7/7. In terms of biological role, catalyzes the anti-1,4-elimination of the C-3 phosphate and the C-6 proR hydrogen from 5-enolpyruvylshikimate-3-phosphate (EPSP) to yield chorismate, which is the branch point compound that serves as the starting substrate for the three terminal pathways of aromatic amino acid biosynthesis. This reaction introduces a second double bond into the aromatic ring system. The protein is Chorismate synthase of Bacillus pumilus (strain SAFR-032).